The following is a 158-amino-acid chain: Snaclec mucetin subunit alpha (158 aa).

An N-terminal signal peptide occupies residues 1–23 (MGRFTFVSFGLLVVFLSLSGTGA). 3 disulfides stabilise this stretch: cysteine 27–cysteine 38, cysteine 55–cysteine 152, and cysteine 127–cysteine 144. Residues 34 to 153 (YDRYCYQAFS…CGRENPFVCK (120 aa)) form the C-type lectin domain.

This sequence belongs to the snaclec family. Dimer and tetramer of heterodimers of alpha and beta subunits ((alphabeta)(2) and (alphabeta)(4)); disulfide-linked. These two multimeric forms are found. In terms of processing, the complex is glycosylated. In terms of tissue distribution, expressed by the venom gland.

The protein localises to the secreted. Potent platelet activator that acts via GPIb (GP1BA/GP1BB). After activation by the toxin, the receptor is redistributed on platelet surface thanks to cytoskeletal translocation. The indirect activation of integrin alpha-IIb/beta-3 (ITGA2B/ITGB3) also induced by the toxin is downstream the cytoskeletal translocation of GPIb. The polypeptide is Snaclec mucetin subunit alpha (Protobothrops mucrosquamatus (Taiwan habu)).